A 372-amino-acid chain; its full sequence is Cytochrome b (372 aa).

The next 4 helical transmembrane spans lie at F25–I45, W69–I90, W105–L125, and F170–I190. Heme b-binding residues include H75 and H89. Positions 174 and 188 each coordinate heme b. H193 serves as a coordination point for a ubiquinone. Helical transmembrane passes span Y218–M238, L280–H300, L312–T332, and F339–P358.

This sequence belongs to the cytochrome b family. As to quaternary structure, the cytochrome bc1 complex contains 3 respiratory subunits (MT-CYB, CYC1 and UQCRFS1), 2 core proteins (UQCRC1 and UQCRC2) and probably 6 low-molecular weight proteins. Requires heme b as cofactor.

Its subcellular location is the mitochondrion inner membrane. Its function is as follows. Component of the ubiquinol-cytochrome c reductase complex (complex III or cytochrome b-c1 complex) that is part of the mitochondrial respiratory chain. The b-c1 complex mediates electron transfer from ubiquinol to cytochrome c. Contributes to the generation of a proton gradient across the mitochondrial membrane that is then used for ATP synthesis. The sequence is that of Cytochrome b (MT-CYB) from Sinomicrurus japonicus (Coral snake).